We begin with the raw amino-acid sequence, 263 residues long: MTEIKAVKRLGQHFLRDEGIITQLLAAIDPKPQQKILEIGPGLGALTLPVLERCHELYAVELDHRVLQPLSEKAAAVGILHLIERDILNIHFAEVAPAPIRIIGNLPYNLSSPILFHCVAQRSDIVDMHFMLQKEVVDRITAPVDTPAYGRLSVMIQLYCQVEALFDVPPEAFAPPPKVNSAVVRLIPQTQLTWNIESIAHFECVVRSAFSQRRKMLRKSLAAYFEPKELMALDVDPTARAETIDGASFARLANALYLKEKNL.

Histidine 13, leucine 15, glycine 40, glutamate 61, aspartate 86, and asparagine 105 together coordinate S-adenosyl-L-methionine.

This sequence belongs to the class I-like SAM-binding methyltransferase superfamily. rRNA adenine N(6)-methyltransferase family. RsmA subfamily.

It is found in the cytoplasm. It carries out the reaction adenosine(1518)/adenosine(1519) in 16S rRNA + 4 S-adenosyl-L-methionine = N(6)-dimethyladenosine(1518)/N(6)-dimethyladenosine(1519) in 16S rRNA + 4 S-adenosyl-L-homocysteine + 4 H(+). Specifically dimethylates two adjacent adenosines (A1518 and A1519) in the loop of a conserved hairpin near the 3'-end of 16S rRNA in the 30S particle. May play a critical role in biogenesis of 30S subunits. This is Ribosomal RNA small subunit methyltransferase A from Dichelobacter nodosus (strain VCS1703A).